The primary structure comprises 516 residues: Cytochrome P450 1A2 (516 aa).

A glycan (O-linked (GlcNAc) serine) is linked at serine 69. Phenylalanine 226 contacts substrate. Cysteine 458 contributes to the heme binding site.

It belongs to the cytochrome P450 family. In terms of assembly, interacts with PGRMC1; the interaction requires PGRMC1 homodimerization. It depends on heme as a cofactor.

The protein resides in the endoplasmic reticulum membrane. The protein localises to the microsome membrane. It carries out the reaction an organic molecule + reduced [NADPH--hemoprotein reductase] + O2 = an alcohol + oxidized [NADPH--hemoprotein reductase] + H2O + H(+). The catalysed reaction is 17beta-estradiol + reduced [NADPH--hemoprotein reductase] + O2 = 2-hydroxy-17beta-estradiol + oxidized [NADPH--hemoprotein reductase] + H2O + H(+). The enzyme catalyses 17beta-estradiol + reduced [NADPH--hemoprotein reductase] + O2 = 4-hydroxy-17beta-estradiol + oxidized [NADPH--hemoprotein reductase] + H2O + H(+). It catalyses the reaction estrone + reduced [NADPH--hemoprotein reductase] + O2 = 2-hydroxyestrone + oxidized [NADPH--hemoprotein reductase] + H2O + H(+). It carries out the reaction estrone + reduced [NADPH--hemoprotein reductase] + O2 = 4-hydroxyestrone + oxidized [NADPH--hemoprotein reductase] + H2O + H(+). The catalysed reaction is cholesterol + reduced [NADPH--hemoprotein reductase] + O2 = 25-hydroxycholesterol + oxidized [NADPH--hemoprotein reductase] + H2O + H(+). The enzyme catalyses all-trans-retinol + reduced [NADPH--hemoprotein reductase] + O2 = all-trans-retinal + oxidized [NADPH--hemoprotein reductase] + 2 H2O + H(+). It catalyses the reaction all-trans-retinal + reduced [NADPH--hemoprotein reductase] + O2 = all-trans-retinoate + oxidized [NADPH--hemoprotein reductase] + H2O + 2 H(+). It carries out the reaction (5Z,8Z,11Z,14Z)-eicosatetraenoate + reduced [NADPH--hemoprotein reductase] + O2 = (14R,15S)-epoxy-(5Z,8Z,11Z)-eicosatrienoate + oxidized [NADPH--hemoprotein reductase] + H2O + H(+). The catalysed reaction is (5Z,8Z,11Z,14Z)-eicosatetraenoate + reduced [NADPH--hemoprotein reductase] + O2 = (14S,15R)-epoxy-(5Z,8Z,11Z)-eicosatrienoate + oxidized [NADPH--hemoprotein reductase] + H2O + H(+). The enzyme catalyses (5Z,8Z,11Z,14Z,17Z)-eicosapentaenoate + reduced [NADPH--hemoprotein reductase] + O2 = (17R,18S)-epoxy-(5Z,8Z,11Z,14Z)-eicosatetraenoate + oxidized [NADPH--hemoprotein reductase] + H2O + H(+). It catalyses the reaction (4Z,7Z,10Z,13Z,16Z,19Z)-docosahexaenoate + reduced [NADPH--hemoprotein reductase] + O2 = (19R,20S)-epoxy-(4Z,7Z,10Z,13Z,16Z)-docosapentaenoate + oxidized [NADPH--hemoprotein reductase] + H2O + H(+). It carries out the reaction (5S)-hydroperoxy-(6E,8Z,11Z,14Z)-eicosatetraenoate = 5-oxo-(6E,8Z,11Z,14Z)-eicosatetraenoate + H2O. The catalysed reaction is (12S)-hydroperoxy-(5Z,8Z,10E,14Z)-eicosatetraenoate = 12-oxo-(5Z,8Z,10E,14Z)-eicosatetraenoate + H2O. The enzyme catalyses (15S)-hydroperoxy-(5Z,8Z,11Z,13E)-eicosatetraenoate = 15-oxo-(5Z,8Z,11Z,13E)-eicosatetraenoate + H2O. It catalyses the reaction (13S)-hydroperoxy-(9Z,11E)-octadecadienoate = 13-oxo-(9Z,11E)-octadecadienoate + H2O. It carries out the reaction (5Z,8Z,11Z,14Z)-eicosatetraenoate + reduced [NADPH--hemoprotein reductase] + O2 = 13-hydroxy-(5Z,8Z,11Z,14Z)-eicosatetraenoate + oxidized [NADPH--hemoprotein reductase] + H2O + H(+). The catalysed reaction is (5Z,8Z,11Z,14Z)-eicosatetraenoate + reduced [NADPH--hemoprotein reductase] + O2 = 19-hydroxy-(5Z,8Z,11Z,14Z)-eicosatetraenoate + oxidized [NADPH--hemoprotein reductase] + H2O + H(+). The enzyme catalyses (9Z,12Z)-octadecadienoate + reduced [NADPH--hemoprotein reductase] + O2 = 11-hydroxy-(9Z,12Z)-octadecadienoate + oxidized [NADPH--hemoprotein reductase] + H2O + H(+). The protein operates within cofactor metabolism; retinol metabolism. It participates in steroid metabolism; cholesterol metabolism. It functions in the pathway lipid metabolism; arachidonate metabolism. Functionally, a cytochrome P450 monooxygenase involved in the metabolism of various endogenous substrates, including fatty acids, steroid hormones and vitamins. Mechanistically, uses molecular oxygen inserting one oxygen atom into a substrate, and reducing the second into a water molecule, with two electrons provided by NADPH via cytochrome P450 reductase (NADPH--hemoprotein reductase). Catalyzes the hydroxylation of carbon-hydrogen bonds. Exhibits high catalytic activity for the formation of hydroxyestrogens from estrone (E1) and 17beta-estradiol (E2), namely 2-hydroxy E1 and E2. Metabolizes cholesterol toward 25-hydroxycholesterol, a physiological regulator of cellular cholesterol homeostasis. May act as a major enzyme for all-trans retinoic acid biosynthesis in the liver. Catalyzes two successive oxidative transformation of all-trans retinol to all-trans retinal and then to the active form all-trans retinoic acid. Primarily catalyzes stereoselective epoxidation of the last double bond of polyunsaturated fatty acids (PUFA), displaying a strong preference for the (R,S) stereoisomer. Catalyzes bisallylic hydroxylation and omega-1 hydroxylation of PUFA. May also participate in eicosanoids metabolism by converting hydroperoxide species into oxo metabolites (lipoxygenase-like reaction, NADPH-independent). Plays a role in the oxidative metabolism of xenobiotics. Catalyzes the N-hydroxylation of heterocyclic amines and the O-deethylation of phenacetin. Metabolizes caffeine via N3-demethylation. This chain is Cytochrome P450 1A2 (CYP1A2), found in Balaenoptera acutorostrata (Common minke whale).